A 206-amino-acid polypeptide reads, in one-letter code: Tektin bundle-interacting protein 1 (206 aa).

As to quaternary structure, microtubule inner protein component of sperm flagellar doublet microtubules.

Its subcellular location is the cytoplasm. It is found in the cytoskeleton. The protein resides in the cilium axoneme. It localises to the flagellum axoneme. Functionally, microtubule inner protein (MIP) part of the dynein-decorated doublet microtubules (DMTs) in cilia axoneme, which is required for motile cilia beating. Located at the center of the tektin bundle where may function to recruit tektins or stabilize the bundle. In Mus musculus (Mouse), this protein is Tektin bundle-interacting protein 1.